Reading from the N-terminus, the 968-residue chain is RNA polymerase-associated protein RapA (968 aa).

The region spanning 164–334 is the Helicase ATP-binding domain; it reads DVGRRHAPRV…FARLRLLDPN (171 aa). 177–184 contributes to the ATP binding site; sequence DEVGLGKT. The DEAH box motif lies at 280–283; that stretch reads DEAH. The Helicase C-terminal domain occupies 490-662; the sequence is RVEWLMGYLT…YLASPDQTEG (173 aa).

This sequence belongs to the SNF2/RAD54 helicase family. RapA subfamily. In terms of assembly, interacts with the RNAP. Has a higher affinity for the core RNAP than for the holoenzyme. Its ATPase activity is stimulated by binding to RNAP.

Its function is as follows. Transcription regulator that activates transcription by stimulating RNA polymerase (RNAP) recycling in case of stress conditions such as supercoiled DNA or high salt concentrations. Probably acts by releasing the RNAP, when it is trapped or immobilized on tightly supercoiled DNA. Does not activate transcription on linear DNA. Probably not involved in DNA repair. In Shigella dysenteriae serotype 1 (strain Sd197), this protein is RNA polymerase-associated protein RapA.